Here is an 83-residue protein sequence, read N- to C-terminus: NAD(P)H-quinone oxidoreductase subunit L (83 aa).

The next 2 helical transmembrane spans lie at 18–38 (IGGYVALGGLYLVVMPLLLFF) and 53–73 (FSVYGLVFFFFPGMIVFAPFL).

Belongs to the complex I NdhL subunit family. In terms of assembly, NDH-1 can be composed of about 15 different subunits; different subcomplexes with different compositions have been identified which probably have different functions.

It is found in the cellular thylakoid membrane. The catalysed reaction is a plastoquinone + NADH + (n+1) H(+)(in) = a plastoquinol + NAD(+) + n H(+)(out). It catalyses the reaction a plastoquinone + NADPH + (n+1) H(+)(in) = a plastoquinol + NADP(+) + n H(+)(out). Its function is as follows. NDH-1 shuttles electrons from an unknown electron donor, via FMN and iron-sulfur (Fe-S) centers, to quinones in the respiratory and/or the photosynthetic chain. The immediate electron acceptor for the enzyme in this species is believed to be plastoquinone. Couples the redox reaction to proton translocation, and thus conserves the redox energy in a proton gradient. Cyanobacterial NDH-1 also plays a role in inorganic carbon-concentration. This is NAD(P)H-quinone oxidoreductase subunit L from Synechococcus sp. (strain CC9311).